Reading from the N-terminus, the 111-residue chain is UPF0125 protein SO_1475 (111 aa).

The disordered stretch occupies residues V88–S111.

Belongs to the UPF0125 (RnfH) family.

This Shewanella oneidensis (strain ATCC 700550 / JCM 31522 / CIP 106686 / LMG 19005 / NCIMB 14063 / MR-1) protein is UPF0125 protein SO_1475.